A 501-amino-acid chain; its full sequence is Pentatricopeptide repeat-containing protein At2g36730 (501 aa).

PPR repeat units lie at residues 77–111, 112–146, 147–177, 178–212, 213–243, 246–276, 277–312, 313–343, and 349–379; these read TPSTWNMLSRGYSSSDSPVESIWVYSEMKRRGIKP, NKLTFPFLLKACASFLGLTAGRQIQVEVLKHGFDF, DVYVGNNLIHLYGTCKKTSDARKVFDEMTER, NVVSWNSIMTALVENGKLNLVFECFCEMIGKRFCP, DETTMVVLLSACGGNLSLGKLVHSQVMVREL, NCRLGTALVDMYAKSGGLEYARLVFERMVDK, NVWTWSAMIVGLAQYGFAEEALQLFSKMMKESSVRP, NYVTFLGVLCACSHTGLVDDGYKYFHEMEKI, and MMIHYGAMVDILGRAGRLNEAYDFIKKMPFE. Positions 384-462 are type E motif; it reads VWRTLLSACS…IAGESCLELG (79 aa). The tract at residues 463–493 is type E(+) motif; it reads GSFHRFFSGYDPRSEYVSIYELLDLFKFQLT.

It belongs to the PPR family. PCMP-E subfamily.

This chain is Pentatricopeptide repeat-containing protein At2g36730 (PCMP-E44), found in Arabidopsis thaliana (Mouse-ear cress).